A 166-amino-acid polypeptide reads, in one-letter code: PTS system glucose-specific EIIA component (166 aa).

Positions 34–138 (DPVFAQKMMG…SVISPIIITN (105 aa)) constitute a PTS EIIA type-1 domain. Positions 71 and 86 each coordinate Zn(2+). The active-site Tele-phosphohistidine intermediate; for EIIA activity is the H86. H86 is subject to Phosphohistidine; by HPr.

Heterodimer with glycerol kinase (glpk). Requires Zn(2+) as cofactor.

It is found in the cytoplasm. The phosphoenolpyruvate-dependent sugar phosphotransferase system (sugar PTS), a major carbohydrate active transport system, catalyzes the phosphorylation of incoming sugar substrates concomitantly with their translocation across the cell membrane. The enzyme II complex composed of PtsG and Crr is involved in glucose transport. The chain is PTS system glucose-specific EIIA component (crr) from Staphylococcus aureus (strain MSSA476).